The sequence spans 707 residues: Polyribonucleotide nucleotidyltransferase (707 aa).

Residues Asp488 and Asp494 each contribute to the Mg(2+) site. Residues 555–614 enclose the KH domain; the sequence is PRLYVMKINPEKIRDVIGKGGAVIRALTEETGTQINIEEDGTITIASNDSAKADEAKRRI. Positions 624 to 692 constitute an S1 motif domain; it reads GKVYEGAITK…EKGRVKLSMK (69 aa).

This sequence belongs to the polyribonucleotide nucleotidyltransferase family. The cofactor is Mg(2+).

Its subcellular location is the cytoplasm. The enzyme catalyses RNA(n+1) + phosphate = RNA(n) + a ribonucleoside 5'-diphosphate. Involved in mRNA degradation. Catalyzes the phosphorolysis of single-stranded polyribonucleotides processively in the 3'- to 5'-direction. This Polaromonas sp. (strain JS666 / ATCC BAA-500) protein is Polyribonucleotide nucleotidyltransferase.